The following is a 341-amino-acid chain: Glucokinase (341 aa).

18 to 23 (GDIGGT) contacts ATP.

Belongs to the bacterial glucokinase family.

It is found in the cytoplasm. It carries out the reaction D-glucose + ATP = D-glucose 6-phosphate + ADP + H(+). The sequence is that of Glucokinase from Rhizobium etli (strain ATCC 51251 / DSM 11541 / JCM 21823 / NBRC 15573 / CFN 42).